A 398-amino-acid polypeptide reads, in one-letter code: Calreticulin (398 aa).

Residues 1 to 19 form the signal peptide; sequence MKAVVLVVVSLLALSSINC. Residues 20–197 form an N-domain region; the sequence is DVFFEEKFPD…NEKVESGDLE (178 aa). A disulfide bond links Cys-105 and Cys-137. An alpha-D-glucoside is bound by residues Tyr-109, Lys-111, Tyr-128, and Asp-135. 7 tandem repeats follow at residues 191-202, 210-221, 227-238, 244-255, 259-269, 273-283, and 287-297. A 4 X approximate repeats region spans residues 191–255; it reads VESGDLEADW…DATKPEDWDD (65 aa). The interval 198 to 308 is P-domain; sequence ADWDFLPNKK…YTPDSNLYKR (111 aa). Positions 207-251 are enriched in basic and acidic residues; it reads KIKDPEAKKPEDWDDKPTIPDPEDKKPEDWDKPEHIPDPDATKPE. The segment at 207–257 is disordered; the sequence is KIKDPEAKKPEDWDDKPTIPDPEDKKPEDWDKPEHIPDPDATKPEDWDDEM. Residues 259–297 are 3 X approximate repeats; the sequence is GEWEPPMIDNPDYKGVWAPKQIDNPAYKGPWVHPEIDNP. The segment at 309 to 398 is C-domain; sequence DEICAVGLDL…AAPVEEHDEL (90 aa). Residue Asp-317 participates in an alpha-D-glucoside binding. Residues 334–398 form a disordered region; sequence DDPAAAKERG…AAPVEEHDEL (65 aa). A compositionally biased stretch (basic and acidic residues) spans 337-372; sequence AAAKERGEVIKKRQEGEKKMKSEQDEAEREKEKAEK. Residues 373–387 show a composition bias toward acidic residues; the sequence is PDDEEDDEDLDDETG. Residues 395–398 carry the Prevents secretion from ER motif; sequence HDEL.

This sequence belongs to the calreticulin family. Monomer. In terms of tissue distribution, expressed in fat bodies. Not expressed in midgut, silk gland, ovary or testis.

It localises to the endoplasmic reticulum lumen. In terms of biological role, molecular calcium-binding chaperone promoting folding, oligomeric assembly and quality control in the ER via the calreticulin/calnexin cycle. This lectin may interact transiently with almost all of the monoglucosylated glycoproteins that are synthesized in the ER. This chain is Calreticulin, found in Bombyx mori (Silk moth).